We begin with the raw amino-acid sequence, 859 residues long: Cadherin-related family member 1 (859 aa).

An N-terminal signal peptide occupies residues 1–21 (MRRGPRVALVLGLLRIYLAQA). Residues 22–701 (NFAPHFFDNG…LIQTKDNPMK (680 aa)) are Extracellular-facing. 6 Cadherin domains span residues 36–135 (NGNM…APRF), 136–247 (IQEP…APIF), 248–354 (VGTP…PPTF), 360–473 (PQNK…VPKF), 474–577 (TSHY…YPQF), and 569–691 (DVND…MAAF). N-linked (GlcNAc...) asparagine glycosylation is found at N58 and N89. N-linked (GlcNAc...) asparagine glycosylation is present at N288. Residues 702 to 722 (AVGVLAGVMAIVVAITVLIST) form a helical membrane-spanning segment. The Cytoplasmic portion of the chain corresponds to 723–859 (ATFWRNKKSN…KKSLDNKAYI (137 aa)). The interval 793–838 (PALPPPPKMASSMVAQQTVPTVSGSLTPQPSPQLPTPKTLGGPVQS) is disordered. Residues 805–816 (MVAQQTVPTVSG) are compositionally biased toward polar residues.

In terms of assembly, interacts with PROM1. In terms of processing, undergoes proteolytic cleavage; produces a soluble 95 kDa N-terminal fragment and a 25 kDa cell-associated C-terminal fragment. Expressed in cone and rod photoreceptor cells (at protein level). Expressed in photoreceptor cells of the outer nuclear layer of the retina. Expressed in mitral and tufted cells in the olfactory bulb.

Its subcellular location is the cell membrane. Its function is as follows. Potential calcium-dependent cell-adhesion protein. May be required for the structural integrity of the outer segment (OS) of photoreceptor cells. The chain is Cadherin-related family member 1 (Cdhr1) from Mus musculus (Mouse).